Reading from the N-terminus, the 489-residue chain is tRNA(Ile)-lysidine synthase (489 aa).

35-40 (SGGLDS) is an ATP binding site.

The protein belongs to the tRNA(Ile)-lysidine synthase family.

The protein localises to the cytoplasm. The catalysed reaction is cytidine(34) in tRNA(Ile2) + L-lysine + ATP = lysidine(34) in tRNA(Ile2) + AMP + diphosphate + H(+). In terms of biological role, ligates lysine onto the cytidine present at position 34 of the AUA codon-specific tRNA(Ile) that contains the anticodon CAU, in an ATP-dependent manner. Cytidine is converted to lysidine, thus changing the amino acid specificity of the tRNA from methionine to isoleucine. This chain is tRNA(Ile)-lysidine synthase, found in Burkholderia mallei (strain ATCC 23344).